A 519-amino-acid polypeptide reads, in one-letter code: Maturase K (519 aa).

The protein belongs to the intron maturase 2 family. MatK subfamily.

The protein localises to the plastid. The protein resides in the chloroplast. In terms of biological role, usually encoded in the trnK tRNA gene intron. Probably assists in splicing its own and other chloroplast group II introns. The polypeptide is Maturase K (Keteleeria davidiana (David's keteleeria)).